A 154-amino-acid polypeptide reads, in one-letter code: Myoglobin (154 aa).

The 147-residue stretch at 2 to 148 (GLSDGEWQLV…FRNDIAAKYK (147 aa)) folds into the Globin domain. Phosphoserine is present on serine 4. Residue histidine 65 participates in nitrite binding. Histidine 65 serves as a coordination point for O2. The residue at position 68 (threonine 68) is a Phosphothreonine. Residue histidine 94 coordinates heme b.

Belongs to the globin family. As to quaternary structure, monomeric.

The protein resides in the cytoplasm. Its subcellular location is the sarcoplasm. It catalyses the reaction Fe(III)-heme b-[protein] + nitric oxide + H2O = Fe(II)-heme b-[protein] + nitrite + 2 H(+). It carries out the reaction H2O2 + AH2 = A + 2 H2O. Monomeric heme protein which primary function is to store oxygen and facilitate its diffusion within muscle tissues. Reversibly binds oxygen through a pentacoordinated heme iron and enables its timely and efficient release as needed during periods of heightened demand. Depending on the oxidative conditions of tissues and cells, and in addition to its ability to bind oxygen, it also has a nitrite reductase activity whereby it regulates the production of bioactive nitric oxide. Under stress conditions, like hypoxia and anoxia, it also protects cells against reactive oxygen species thanks to its pseudoperoxidase activity. The protein is Myoglobin (MB) of Meles meles (Eurasian badger).